Here is a 1266-residue protein sequence, read N- to C-terminus: Phosphatidylinositol 3,4,5-trisphosphate 5-phosphatase 2A (1266 aa).

In terms of domain architecture, SH2 spans Trp-15–Val-111. The span at Glu-114–Ser-123 shows a compositional bias: basic and acidic residues. Disordered regions lie at residues Glu-114 to Ala-159 and Asp-879 to Thr-951. Positions Thr-136 to Ala-159 are enriched in polar residues. Basic and acidic residues-rich tracts occupy residues Arg-915–Ser-924 and Thr-931–Pro-944. The short motif at Asn-958–Tyr-961 is the NPXY motif element. Tyr-961 carries the post-translational modification Phosphotyrosine. Disordered stretches follow at residues Pro-986–Asp-1132 and Glu-1147–Ser-1174. Residues Pro-994–Gly-1012 are compositionally biased toward low complexity. A compositionally biased stretch (pro residues) spans Arg-1045–Pro-1056. The SAM domain occupies Ser-1203–Lys-1266.

This sequence belongs to the inositol 1,4,5-trisphosphate 5-phosphatase family. Tyrosine phosphorylated by the members of the SRC family after exposure to a diverse array of extracellular stimuli.

The protein localises to the cytoplasm. Its subcellular location is the cytosol. It is found in the cytoskeleton. The protein resides in the membrane. It localises to the cell projection. The protein localises to the filopodium. Its subcellular location is the lamellipodium. It is found in the nucleus. The protein resides in the nucleus speckle. The enzyme catalyses a 1,2-diacyl-sn-glycero-3-phospho-(1D-myo-inositol-3,4,5-trisphosphate) + H2O = a 1,2-diacyl-sn-glycero-3-phospho-(1D-myo-inositol-3,4-bisphosphate) + phosphate. Its function is as follows. Phosphatidylinositol (PtdIns) phosphatase that specifically hydrolyzes the 5-phosphate of phosphatidylinositol-3,4,5-trisphosphate (PtdIns(3,4,5)P3) to produce PtdIns(3,4)P2, thereby negatively regulating the PI3K (phosphoinositide 3-kinase) pathways. Plays a central role in regulation of PI3K-dependent insulin signaling, although the precise molecular mechanisms and signaling pathways remain unclear. Part of a signaling pathway that regulates actin cytoskeleton remodeling. Required for the maintenance and dynamic remodeling of actin structures as well as in endocytosis, having a major impact on ligand-induced EGFR internalization and degradation. Participates in regulation of cortical and submembraneous actin. Regulates cell adhesion and cell spreading. Acts as a negative regulator of the FC-gamma-RIIA receptor (FCGR2A). Mediates signaling from the FC-gamma-RIIB receptor (FCGR2B), playing a central role in terminating signal transduction from activating immune/hematopoietic cell receptor systems. May also hydrolyze PtdIns(1,3,4,5)P4, and could thus affect the levels of the higher inositol polyphosphates like InsP6. The chain is Phosphatidylinositol 3,4,5-trisphosphate 5-phosphatase 2A (inppl1a) from Danio rerio (Zebrafish).